The primary structure comprises 202 residues: Small ribosomal subunit protein uS4c (202 aa).

The region spanning 90 to 151 (MRLDNTIFRL…KQKSRFIITK (62 aa)) is the S4 RNA-binding domain.

This sequence belongs to the universal ribosomal protein uS4 family. Part of the 30S ribosomal subunit. Contacts protein S5. The interaction surface between S4 and S5 is involved in control of translational fidelity.

The protein resides in the plastid. Its subcellular location is the chloroplast. Its function is as follows. One of the primary rRNA binding proteins, it binds directly to 16S rRNA where it nucleates assembly of the body of the 30S subunit. Functionally, with S5 and S12 plays an important role in translational accuracy. The sequence is that of Small ribosomal subunit protein uS4c (rps4) from Plagiochila adianthoides (Liverwort).